Reading from the N-terminus, the 882-residue chain is Pentatricopeptide repeat-containing protein At3g03580 (882 aa).

20 PPR repeats span residues 3 to 37, 38 to 68, 70 to 104, 105 to 139, 140 to 170, 171 to 205, 206 to 240, 241 to 271, 272 to 307, 309 to 340, 341 to 371, 372 to 406, 407 to 441, 442 to 472, 473 to 507, 508 to 542, 543 to 573, 574 to 608, 609 to 639, and 645 to 675; these read TRVS…GLDS, SDFF…VSPA, NVYL…KVSP, DKYT…GFES, DLFV…MPVR, DLVS…WIVP, DSFT…GVNS, VVVV…MDVR, DSVS…KPDL, TVSS…GFVL, ESTV…MECK, DTVS…EEQA, DHIT…GICI, DLSV…MGTG, DTVT…EVVP, DMAT…GYES, ELQI…MSRR, DVVT…GIVP, DSVV…MKTH, and MIEH…MPIK. Residues 680-755 form a type E motif region; sequence IWASVLRACR…NPGYSWIEVG (76 aa). Residues 756–786 are type E(+) motif; that stretch reads KNVHVFSSGDDSAPQSEAIYKSLEILYSLMA. Residues 787 to 882 are type DYW motif; that stretch reads KEGYIPDPRE…DGTCSCKDRW (96 aa).

It belongs to the PPR family. PCMP-H subfamily.

The chain is Pentatricopeptide repeat-containing protein At3g03580 (PCMP-H23) from Arabidopsis thaliana (Mouse-ear cress).